The primary structure comprises 235 residues: Phosphoribosylaminoimidazole-succinocarboxamide synthase (235 aa).

Belongs to the SAICAR synthetase family.

The enzyme catalyses 5-amino-1-(5-phospho-D-ribosyl)imidazole-4-carboxylate + L-aspartate + ATP = (2S)-2-[5-amino-1-(5-phospho-beta-D-ribosyl)imidazole-4-carboxamido]succinate + ADP + phosphate + 2 H(+). It participates in purine metabolism; IMP biosynthesis via de novo pathway; 5-amino-1-(5-phospho-D-ribosyl)imidazole-4-carboxamide from 5-amino-1-(5-phospho-D-ribosyl)imidazole-4-carboxylate: step 1/2. This is Phosphoribosylaminoimidazole-succinocarboxamide synthase from Caldanaerobacter subterraneus subsp. tengcongensis (strain DSM 15242 / JCM 11007 / NBRC 100824 / MB4) (Thermoanaerobacter tengcongensis).